A 184-amino-acid chain; its full sequence is Alpha-tubulin N-acetyltransferase (184 aa).

The 174-residue stretch at 1–174 (MNIPPEKMHN…NNFVIFAEYF (174 aa)) folds into the N-acetyltransferase domain. Acetyl-CoA-binding positions include 108-121 (FYIQRNFRKRGLGL) and 144-153 (SYKLQSFLKK).

It belongs to the acetyltransferase ATAT1 family.

The enzyme catalyses L-lysyl-[alpha-tubulin] + acetyl-CoA = N(6)-acetyl-L-lysyl-[alpha-tubulin] + CoA + H(+). Its function is as follows. Specifically acetylates 'Lys-40' in alpha-tubulin on the lumenal side of microtubules. Promotes microtubule destabilization and accelerates microtubule dynamics; this activity may be independent of acetylation activity. Acetylates alpha-tubulin with a slow enzymatic rate, due to a catalytic site that is not optimized for acetyl transfer. Enters the microtubule through each end and diffuses quickly throughout the lumen of microtubules. Acetylates only long/old microtubules because of its slow acetylation rate since it does not have time to act on dynamically unstable microtubules before the enzyme is released. The protein is Alpha-tubulin N-acetyltransferase of Plasmodium knowlesi (strain H).